Here is a 980-residue protein sequence, read N- to C-terminus: Zinc finger BED domain-containing protein 6 (980 aa).

Residues 1 to 89 (MSVCTLSVPV…ILAKKFSKDL (89 aa)) form a required for nucleolar localization region. Residues 89-109 (LGSGRPVADAPASLASGAPEQ) are disordered. A BED-type 1 zinc finger spans residues 130–187 (AKTSIVWHFFHVDPQYTWRAICNLCEKSVSRGKPGSHLGTSTLQRHLQARHSPHWTRA). The Zn(2+) site is built by cysteine 151, cysteine 154, histidine 175, and histidine 180. The disordered stretch occupies residues 201–239 (LDLSLSPPSPGSNGSFEYIPTDSVDENRMGKKRDKSASD). Low complexity predominate over residues 203–215 (LSLSPPSPGSNGS). The segment at 265–322 (AKTSAVWNFFYTDPQHISRAVCNICKRSVSRGRPGSHLGTSTLQRHLQATHPIHWAVA) adopts a BED-type 2 zinc-finger fold. Residues cysteine 286, cysteine 289, histidine 310, and histidine 315 each coordinate Zn(2+). The segment at 328–397 (AIGNGLDETE…ADQDNPVHAQ (70 aa)) is disordered. The span at 360-373 (TAEDLSDSDTDEPP) shows a compositional bias: acidic residues. Residue serine 383 is modified to Phosphoserine. The interval 868-950 (VVDEYFKEKY…EQLIFLKMNL (83 aa)) is HATC (Hobo-Ac-Tam3) domain.

Expressed in pancreatic islet cells and weakly expressed in surrounding exocrine tissues (at protein level). Expressed in muscle and brain (at protein level). Shows broad tissue distribution with expression detected in brain, stomach, intestine, heart, kidney, liver, lung, skeletal muscle, ovary, spleen, tail and testis.

It localises to the nucleus. The protein localises to the nucleolus. Its subcellular location is the cytoplasm. Transcriptional repressor which binds to the consensus sequence 5'-GCTCGC-3', transcription regulation may be tissue-specific. Regulates the expression of target genes such as: IGF2, PGAP6/TMEM8, ENHO, and PIANP. Acts as a transcriptional repressor of growth factor IGF2, thereby negatively regulating postnatal growth of muscles and internal organs, especially in females. Negatively regulates myoblast differentiation and myoblast mitochondrial activity via its regulation of IGF2 transcription. Negatively regulates the cell cycle of myoblasts, potentially via transcriptional regulation of the E2F family of transcription factors such as: E2F1 and E2F2. Positively regulates the cell cycle and survival of pancreatic beta cells. Binds to the CDH2 gene and may directly repress CDH2 transcription. Probably by controlling CDH2 expression, regulates pancreatic beta cell adhesion, and formation of cell-to-cell junctions between pancreatic beta cells and neural crest stem cells. May also play a role in embryonic beta cell differentiation. May play a role in insulin sensitivity and glucose clearance. The sequence is that of Zinc finger BED domain-containing protein 6 from Mus musculus (Mouse).